The sequence spans 823 residues: Apoptosis-resistant E3 ubiquitin protein ligase 1 (823 aa).

The stretch at 64–158 is one Filamin repeat; it reads WDWKDPYEVG…VAYSPYYKIF (95 aa). Residues 315–345 form a disordered region; that stretch reads PPMHMSSSQRRPSTAIEEDDEDSPSECHTPE. The interval 483–789 is interaction with SOCS2; the sequence is SISDWSKNFE…THSTLPTAHT (307 aa). An HECT domain is found at 483 to 823; sequence SISDWSKNFE…SEGCEGFGML (341 aa). Catalysis depends on C790, which acts as the Glycyl thioester intermediate.

In terms of assembly, interacts with SOCS2. Interacts (via HECT domain) with HTRA2, DIABLO/SMAC and SEPTIN4; in the cytoplasm following induction of apoptosis. Post-translationally, autoubiquitinated in vitro in the presence of E2 enzyme UBE2D1/UBCH5A. As to expression, detected in brain, testis, heart, liver, lung and kidney with very low levels in skeletal muscle and spleen.

It carries out the reaction S-ubiquitinyl-[E2 ubiquitin-conjugating enzyme]-L-cysteine + [acceptor protein]-L-lysine = [E2 ubiquitin-conjugating enzyme]-L-cysteine + N(6)-ubiquitinyl-[acceptor protein]-L-lysine.. The protein operates within protein modification; protein ubiquitination. In terms of biological role, E3 ubiquitin-protein ligase that catalyzes 'Lys-11'- or 'Lys-33'-linked polyubiquitin chains, with some preference for 'Lys-33' linkages. E3 ubiquitin-protein ligases accept ubiquitin from an E2 ubiquitin-conjugating enzyme in the form of a thioester and then directly transfers the ubiquitin to targeted substrates. Ubiquitinates SEPTIN4, DIABLO/SMAC and HTRA2 in vitro. Modulates pulmonary inflammation by targeting SOCS2 for ubiquitination and subsequent degradation by the proteasome. This Mus musculus (Mouse) protein is Apoptosis-resistant E3 ubiquitin protein ligase 1 (Arel1).